The chain runs to 214 residues: Phosphatidylserine decarboxylase proenzyme (214 aa).

The Schiff-base intermediate with substrate; via pyruvic acid role is filled by Ser182. Pyruvic acid (Ser); by autocatalysis is present on Ser182.

The protein belongs to the phosphatidylserine decarboxylase family. PSD-A subfamily. In terms of assembly, heterodimer of a large membrane-associated beta subunit and a small pyruvoyl-containing alpha subunit. The cofactor is pyruvate. Post-translationally, is synthesized initially as an inactive proenzyme. Formation of the active enzyme involves a self-maturation process in which the active site pyruvoyl group is generated from an internal serine residue via an autocatalytic post-translational modification. Two non-identical subunits are generated from the proenzyme in this reaction, and the pyruvate is formed at the N-terminus of the alpha chain, which is derived from the carboxyl end of the proenzyme. The post-translation cleavage follows an unusual pathway, termed non-hydrolytic serinolysis, in which the side chain hydroxyl group of the serine supplies its oxygen atom to form the C-terminus of the beta chain, while the remainder of the serine residue undergoes an oxidative deamination to produce ammonia and the pyruvoyl prosthetic group on the alpha chain.

The protein resides in the cell membrane. The enzyme catalyses a 1,2-diacyl-sn-glycero-3-phospho-L-serine + H(+) = a 1,2-diacyl-sn-glycero-3-phosphoethanolamine + CO2. Its pathway is phospholipid metabolism; phosphatidylethanolamine biosynthesis; phosphatidylethanolamine from CDP-diacylglycerol: step 2/2. Functionally, catalyzes the formation of phosphatidylethanolamine (PtdEtn) from phosphatidylserine (PtdSer). This chain is Phosphatidylserine decarboxylase proenzyme, found in Burkholderia vietnamiensis (strain G4 / LMG 22486) (Burkholderia cepacia (strain R1808)).